A 118-amino-acid polypeptide reads, in one-letter code: Large ribosomal subunit protein bL20 (118 aa).

It belongs to the bacterial ribosomal protein bL20 family.

In terms of biological role, binds directly to 23S ribosomal RNA and is necessary for the in vitro assembly process of the 50S ribosomal subunit. It is not involved in the protein synthesizing functions of that subunit. The chain is Large ribosomal subunit protein bL20 from Yersinia pseudotuberculosis serotype O:1b (strain IP 31758).